Reading from the N-terminus, the 305-residue chain is MQQTNPAAVGDYLRKLQQEIVAAVEAADGGTCVRDAWQKEPGEALQGSGLTCILEGGALFERAGCGFSQVRGPRLPPSATQNRPELAGAPFEAMGVSLVFHPRNPYVPIVHMNVRMLAALPEGKDPVCWFGGGMDLTPCYGFEDDAVHFHTVCRDALAPFGDDKYPRFKTWCDEYFFLKHRNEQRGIGGIFFDDFAEGGFDNGFALLRSVGNAFLPAYLPIIERRRAMPWGERERAFQLYRRGRYVEFNLVWDRGTHFGLQSGGRTESILLSMPPLASWAYQQQPEPGSPEAALYSDFIVRRDWL.

S97 provides a ligand contact to substrate. A divalent metal cation-binding residues include H101 and H111. Residue H111 is the Proton donor of the active site. 113–115 (NVR) lines the substrate pocket. H150 and H180 together coordinate a divalent metal cation. The interval 245–280 (YVEFNLVWDRGTHFGLQSGGRTESILLSMPPLASWA) is important for dimerization. 263 to 265 (GGR) serves as a coordination point for substrate.

This sequence belongs to the aerobic coproporphyrinogen-III oxidase family. In terms of assembly, homodimer. Requires a divalent metal cation as cofactor.

It is found in the cytoplasm. The catalysed reaction is coproporphyrinogen III + O2 + 2 H(+) = protoporphyrinogen IX + 2 CO2 + 2 H2O. The protein operates within porphyrin-containing compound metabolism; protoporphyrin-IX biosynthesis; protoporphyrinogen-IX from coproporphyrinogen-III (O2 route): step 1/1. Involved in the heme biosynthesis. Catalyzes the aerobic oxidative decarboxylation of propionate groups of rings A and B of coproporphyrinogen-III to yield the vinyl groups in protoporphyrinogen-IX. The chain is Oxygen-dependent coproporphyrinogen-III oxidase from Variovorax paradoxus (strain S110).